A 264-amino-acid polypeptide reads, in one-letter code: Undecaprenyl-diphosphatase (264 aa).

7 helical membrane-spanning segments follow: residues Leu34–Ile54, Leu75–Ile95, Tyr104–Ile124, Leu137–Val157, Tyr180–Ser200, Val207–Gly227, and Ile243–Leu263.

The protein belongs to the UppP family.

Its subcellular location is the cell membrane. It catalyses the reaction di-trans,octa-cis-undecaprenyl diphosphate + H2O = di-trans,octa-cis-undecaprenyl phosphate + phosphate + H(+). Its function is as follows. Catalyzes the dephosphorylation of undecaprenyl diphosphate (UPP). The polypeptide is Undecaprenyl-diphosphatase (Sulfurisphaera tokodaii (strain DSM 16993 / JCM 10545 / NBRC 100140 / 7) (Sulfolobus tokodaii)).